The following is a 445-amino-acid chain: Dolichyl-diphosphooligosaccharide--protein glycosyltransferase 48 kDa subunit (445 aa).

The first 20 residues, 1-20 (MRWLPGLLLIASIGFHQSLA), serve as a signal peptide directing secretion. At 21-405 (DRVLVLGETA…YERFIRSAYP (385 aa)) the chain is on the lumenal side. Residues 406 to 426 (YYASSFSMMAGLVLFSIVYLY) traverse the membrane as a helical segment. The Cytoplasmic portion of the chain corresponds to 427–445 (HKDTPVKGAKVLDSEKKKN).

It belongs to the DDOST 48 kDa subunit family. Component of the oligosaccharyltransferase (OST) complex.

Its subcellular location is the endoplasmic reticulum membrane. Its pathway is protein modification; protein glycosylation. Subunit of the oligosaccharyl transferase (OST) complex that catalyzes the initial transfer of a defined glycan (Glc(3)Man(9)GlcNAc(2) in eukaryotes) from the lipid carrier dolichol-pyrophosphate to an asparagine residue within an Asn-X-Ser/Thr consensus motif in nascent polypeptide chains, the first step in protein N-glycosylation. N-glycosylation occurs cotranslationally and the complex associates with the Sec61 complex at the channel-forming translocon complex that mediates protein translocation across the endoplasmic reticulum (ER). All subunits are required for a maximal enzyme activity. Required for the assembly of both SST3A- and SS3B-containing OST complexes. Required for normal lifespan. In Caenorhabditis elegans, this protein is Dolichyl-diphosphooligosaccharide--protein glycosyltransferase 48 kDa subunit.